The following is a 325-amino-acid chain: Polyamine aminopropyltransferase (325 aa).

Positions 11–248 (SSMAEDFAVE…TLWAMAMASD (238 aa)) constitute a PABS domain. S-methyl-5'-thioadenosine is bound at residue glutamine 44. Positions 75 and 99 each coordinate spermidine. Residues glutamate 119 and 151–152 (DG) contribute to the S-methyl-5'-thioadenosine site. The Proton acceptor role is filled by aspartate 169. An S-methyl-5'-thioadenosine-binding site is contributed by proline 176.

This sequence belongs to the spermidine/spermine synthase family. As to quaternary structure, homodimer or homotetramer.

The protein localises to the cytoplasm. It carries out the reaction S-adenosyl 3-(methylsulfanyl)propylamine + putrescine = S-methyl-5'-thioadenosine + spermidine + H(+). It participates in amine and polyamine biosynthesis; spermidine biosynthesis; spermidine from putrescine: step 1/1. Its function is as follows. Catalyzes the irreversible transfer of a propylamine group from the amino donor S-adenosylmethioninamine (decarboxy-AdoMet) to putrescine (1,4-diaminobutane) to yield spermidine. This Nitrosomonas europaea (strain ATCC 19718 / CIP 103999 / KCTC 2705 / NBRC 14298) protein is Polyamine aminopropyltransferase.